A 450-amino-acid polypeptide reads, in one-letter code: Growth/differentiation factor 7 (450 aa).

A signal peptide spans 1–19; it reads MDLSAAAALCLWLLSACRP. The propeptide occupies 20–321; it reads RDGLEAAAVL…AVIGGRRRRR (302 aa). Asn-83 carries N-linked (GlcNAc...) asparagine glycosylation. Residues 296–349 form a disordered region; it reads ASEPLPDPGTGTASPRAVIGGRRRRRTALAGTRTAQGSGGGAGRGHGRRGRSRC. The span at 340–349 shows a compositional bias: basic residues; sequence GHGRRGRSRC. Cystine bridges form between Cys-349-Cys-415, Cys-378-Cys-447, and Cys-382-Cys-449.

This sequence belongs to the TGF-beta family. As to quaternary structure, homodimer; disulfide-linked.

It localises to the secreted. Its function is as follows. May play an active role in the motor area of the primate neocortex. This Homo sapiens (Human) protein is Growth/differentiation factor 7 (GDF7).